The primary structure comprises 879 residues: Protein P (879 aa).

Residues Met-1–Gln-184 are terminal protein domain (TP). The segment at Leu-185–Ile-382 is spacer. The disordered stretch occupies residues Ser-304–Gly-345. The polymerase/reverse transcriptase domain (RT) stretch occupies residues Asp-383–Gln-724. The 242-residue stretch at Asp-393 to Ile-634 folds into the Reverse transcriptase domain. Residues Asp-465, Asp-585, and Asp-586 each coordinate Mg(2+).

The protein belongs to the hepadnaviridae P protein family.

The enzyme catalyses DNA(n) + a 2'-deoxyribonucleoside 5'-triphosphate = DNA(n+1) + diphosphate. It carries out the reaction Endonucleolytic cleavage to 5'-phosphomonoester.. Activated by host HSP70 and HSP40 in vitro to be able to bind the epsilon loop of the pgRNA. Because deletion of the RNase H region renders the protein partly chaperone-independent, the chaperones may be needed indirectly to relieve occlusion of the RNA-binding site by this domain. Inhibited by several reverse-transcriptase inhibitors: Lamivudine, Adefovir and Entecavir. In terms of biological role, multifunctional enzyme that converts the viral RNA genome into dsDNA in viral cytoplasmic capsids. This enzyme displays a DNA polymerase activity that can copy either DNA or RNA templates, and a ribonuclease H (RNase H) activity that cleaves the RNA strand of RNA-DNA heteroduplexes in a partially processive 3'- to 5'-endonucleasic mode. Neo-synthesized pregenomic RNA (pgRNA) are encapsidated together with the P protein, and reverse-transcribed inside the nucleocapsid. Initiation of reverse-transcription occurs first by binding the epsilon loop on the pgRNA genome, and is initiated by protein priming, thereby the 5'-end of (-)DNA is covalently linked to P protein. Partial (+)DNA is synthesized from the (-)DNA template and generates the relaxed circular DNA (RC-DNA) genome. After budding and infection, the RC-DNA migrates in the nucleus, and is converted into a plasmid-like covalently closed circular DNA (cccDNA). The activity of P protein does not seem to be necessary for cccDNA generation, and is presumably released from (+)DNA by host nuclear DNA repair machinery. This is Protein P from Woodchuck hepatitis B virus (isolate 1) (WHV).